The sequence spans 366 residues: Cobalt-precorrin-5B C(1)-methyltransferase (366 aa).

This sequence belongs to the CbiD family.

It catalyses the reaction Co-precorrin-5B + S-adenosyl-L-methionine = Co-precorrin-6A + S-adenosyl-L-homocysteine. It participates in cofactor biosynthesis; adenosylcobalamin biosynthesis; cob(II)yrinate a,c-diamide from sirohydrochlorin (anaerobic route): step 6/10. In terms of biological role, catalyzes the methylation of C-1 in cobalt-precorrin-5B to form cobalt-precorrin-6A. This Thermoanaerobacter sp. (strain X514) protein is Cobalt-precorrin-5B C(1)-methyltransferase.